The primary structure comprises 359 residues: Phosphoserine aminotransferase (359 aa).

The L-glutamate site is built by Ser9 and Arg42. Residues 76–77, Trp102, Thr152, Asp171, and Gln194 each bind pyridoxal 5'-phosphate; that span reads AS. An N6-(pyridoxal phosphate)lysine modification is found at Lys195. 236–237 lines the pyridoxal 5'-phosphate pocket; sequence NT.

This sequence belongs to the class-V pyridoxal-phosphate-dependent aminotransferase family. SerC subfamily. As to quaternary structure, homodimer. The cofactor is pyridoxal 5'-phosphate.

The protein localises to the cytoplasm. It catalyses the reaction O-phospho-L-serine + 2-oxoglutarate = 3-phosphooxypyruvate + L-glutamate. It carries out the reaction 4-(phosphooxy)-L-threonine + 2-oxoglutarate = (R)-3-hydroxy-2-oxo-4-phosphooxybutanoate + L-glutamate. It participates in amino-acid biosynthesis; L-serine biosynthesis; L-serine from 3-phospho-D-glycerate: step 2/3. It functions in the pathway cofactor biosynthesis; pyridoxine 5'-phosphate biosynthesis; pyridoxine 5'-phosphate from D-erythrose 4-phosphate: step 3/5. In terms of biological role, catalyzes the reversible conversion of 3-phosphohydroxypyruvate to phosphoserine and of 3-hydroxy-2-oxo-4-phosphonooxybutanoate to phosphohydroxythreonine. The protein is Phosphoserine aminotransferase of Marinomonas sp. (strain MWYL1).